An 800-amino-acid chain; its full sequence is Fibroblast growth factor receptor 3 (800 aa).

Residues 1 to 20 (MVPLCLLLYLATLVFPPVYS) form the signal peptide. The Ig-like C2-type 1 domain maps to 21–122 (AHLLSPEPTD…YTVKVIDSLS (102 aa)). Over 21 to 363 (AHLLSPEPTD…EMEREDDYAD (343 aa)) the chain is Extracellular. Cysteine 55 and cysteine 101 form a disulfide bridge. Residues asparagine 77, asparagine 90, and asparagine 112 are each glycosylated (N-linked (GlcNAc...) asparagine). A compositionally biased stretch (acidic residues) spans 124-136 (GDDEDYDEDEDEA). The interval 124-143 (GDDEDYDEDEDEAGNGNAEA) is disordered. 2 consecutive Ig-like C2-type domains span residues 144 to 237 (PYWT…YQLD) and 246 to 348 (PILQ…AWLT). A disulfide bridge links cysteine 169 with cysteine 221. 5 N-linked (GlcNAc...) asparagine glycosylation sites follow: asparagine 218, asparagine 255, asparagine 287, asparagine 308, and asparagine 321. Cysteine 268 and cysteine 332 are joined by a disulfide. Residues 364–384 (ILIYVTSCVLFILTMVIIILC) form a helical membrane-spanning segment. Topologically, residues 385–800 (RMWINTQKTL…HHHSNGVIRT (416 aa)) are cytoplasmic. The Protein kinase domain maps to 460–739 (LTLGKPLGEG…RQLVEDHDRV (280 aa)). Residues 466–474 (LGEGCFGQV) and lysine 496 each bind ATP. The active-site Proton acceptor is aspartate 605. Phosphotyrosine; by autocatalysis occurs at positions 635, 636, 712, and 748. The segment covering 764–773 (DSNSTCSSGD) has biased composition (polar residues). Residues 764 to 800 (DSNSTCSSGDDSVFAHDPLPEEPCLPKHHHSNGVIRT) form a disordered region.

The protein belongs to the protein kinase superfamily. Tyr protein kinase family. Fibroblast growth factor receptor subfamily. In terms of assembly, monomer. Homodimer after ligand binding. Post-translationally, autophosphorylated. Binding of FGF family members together with heparan sulfate proteoglycan or heparin promotes receptor dimerization and autophosphorylation on tyrosine residues. Autophosphorylation occurs in trans between the two FGFR molecules present in the dimer.

The protein localises to the cell membrane. The catalysed reaction is L-tyrosyl-[protein] + ATP = O-phospho-L-tyrosyl-[protein] + ADP + H(+). With respect to regulation, present in an inactive conformation in the absence of bound ligand. Ligand binding leads to dimerization and activation by autophosphorylation on tyrosine residues. In terms of biological role, tyrosine-protein kinase that acts as a cell-surface receptor for fibroblast growth factors and plays an essential role in the regulation of cell proliferation, differentiation and apoptosis. Plays an essential role in the regulation of chondrocyte differentiation, proliferation and apoptosis, and is required for normal skeleton development. Regulates both osteogenesis and postnatal bone mineralization by osteoblasts. Promotes apoptosis in chondrocytes, but can also promote cancer cell proliferation. Phosphorylates PLCG1, CBL and FRS2. Ligand binding leads to the activation of several signaling cascades. Activation of PLCG1 leads to the production of the cellular signaling molecules diacylglycerol and inositol 1,4,5-trisphosphate. Phosphorylation of FRS2 triggers recruitment of GRB2, GAB1, PIK3R1 and SOS1, and mediates activation of RAS, MAPK1/ERK2, MAPK3/ERK1 and the MAP kinase signaling pathway, as well as of the AKT1 signaling pathway. This is Fibroblast growth factor receptor 3 (fgfr3) from Danio rerio (Zebrafish).